Here is a 156-residue protein sequence, read N- to C-terminus: Phosphoribosyl-AMP cyclohydrolase (156 aa).

Residue aspartate 106 participates in Mg(2+) binding. Cysteine 107 contributes to the Zn(2+) binding site. 2 residues coordinate Mg(2+): aspartate 108 and aspartate 110. The Zn(2+) site is built by cysteine 123 and cysteine 130.

It belongs to the PRA-CH family. In terms of assembly, homodimer. It depends on Mg(2+) as a cofactor. The cofactor is Zn(2+).

It is found in the cytoplasm. The catalysed reaction is 1-(5-phospho-beta-D-ribosyl)-5'-AMP + H2O = 1-(5-phospho-beta-D-ribosyl)-5-[(5-phospho-beta-D-ribosylamino)methylideneamino]imidazole-4-carboxamide. The protein operates within amino-acid biosynthesis; L-histidine biosynthesis; L-histidine from 5-phospho-alpha-D-ribose 1-diphosphate: step 3/9. Functionally, catalyzes the hydrolysis of the adenine ring of phosphoribosyl-AMP. The protein is Phosphoribosyl-AMP cyclohydrolase of Gluconobacter oxydans (strain 621H) (Gluconobacter suboxydans).